Consider the following 1040-residue polypeptide: Multidrug resistance protein MdtB (1040 aa).

The next 12 helical transmembrane spans lie at 16-36 (FILR…AGII), 347-367 (LMLA…NIPA), 369-389 (IIPA…MVFL), 396-416 (LTLM…IVVI), 440-460 (IGFT…PLLF), 472-492 (FAVT…TLTP), 537-557 (WLTL…WIFI), 863-883 (LGST…VLGV), 888-908 (FIHP…ALLA), 911-931 (IAGA…IGIV), 968-988 (ILMT…STGV), and 998-1018 (IGMV…TPVI).

Belongs to the resistance-nodulation-cell division (RND) (TC 2.A.6) family. MdtB subfamily. In terms of assembly, part of a tripartite efflux system composed of MdtA, MdtB and MdtC. MdtB forms a heteromultimer with MdtC.

The protein localises to the cell inner membrane. In Cronobacter sakazakii (strain ATCC BAA-894) (Enterobacter sakazakii), this protein is Multidrug resistance protein MdtB.